We begin with the raw amino-acid sequence, 469 residues long: Phosphatidylcholine:ceramide cholinephosphotransferase 1 (469 aa).

A disordered region spans residues 40 to 177 (TTKIGPKLET…GDKPASPHDR (138 aa)). Basic and acidic residues-rich tracts occupy residues 72–91 (AAEKVEKQHDDDGVVVHEET), 100–117 (SHHDKQKPGETKKSGDGK), and 162–177 (VRLEMPGDKPASPHDR). Transmembrane regions (helical) follow at residues 186–206 (LVAFLMLVVAAAGNTITLSWI), 231–251 (LRLCENLMIGSFVSLLVLILF), 262–282 (LCFIGSILYGMRCITMMVTPV), 300–320 (TFSLIVMRGVWSMFGLGLNLF), 327–347 (LCGDYIYSGHTLVLVVSALFI), and 355–375 (FYILHWLSWLVCSVGVIFLVL). Histidine 336 is a catalytic residue. Residues 376–469 (SHGHYTIDVI…RNGAARPAFE (94 aa)) are Cytoplasmic-facing. Residues histidine 379 and aspartate 383 contribute to the active site.

This sequence belongs to the sphingomyelin synthase family.

The protein resides in the golgi apparatus membrane. The catalysed reaction is an N-acylsphing-4-enine + a 1,2-diacyl-sn-glycero-3-phosphocholine = a sphingomyelin + a 1,2-diacyl-sn-glycerol. The enzyme catalyses an N-acyl-15-methylhexadecasphing-4-enine + a 1,2-diacyl-sn-glycero-3-phosphocholine = an N-acyl-15-methylhexadecasphing-4-enine-1-phosphocholine + a 1,2-diacyl-sn-glycerol. The protein operates within lipid metabolism; sphingolipid metabolism. Its function is as follows. Sphingomyelin synthases (SM synthase or SMS) synthesize the sphingolipid sphingomyelin (SM) through transfer of the phosphatidyl head group of 1,2-diacyl-sn-glycero-3-phosphocholine (phosphatidylcholine, PC) on to the primary hydroxyl of ceramide (N-acylsphingoid base), yielding 1,2-diacyl-sn-glycerol (diacylglycerol, DAG) as a side product. Functions as a bidirectional lipid cholinephosphotransferases capable of converting PC and ceramide to SM and DAG and vice versa depending on the respective levels of ceramide and DAG as phosphocholine acceptors, respectively. The chain is Phosphatidylcholine:ceramide cholinephosphotransferase 1 (sms-1) from Caenorhabditis elegans.